Reading from the N-terminus, the 357-residue chain is DNA integrity scanning protein DisA (357 aa).

The region spanning 8 to 146 is the DAC domain; that stretch reads VKSMINILQL…GNLRYTLKDI (139 aa). ATP-binding positions include Gly-75, Leu-93, and 106–110; that span reads MRHRT.

It belongs to the DisA family. As to quaternary structure, homooctamer. The cofactor is Mg(2+).

The enzyme catalyses 2 ATP = 3',3'-c-di-AMP + 2 diphosphate. Functionally, participates in a DNA-damage check-point that is active prior to asymmetric division when DNA is damaged. DisA forms globular foci that rapidly scan along the chromosomes during sporulation, searching for lesions. When a lesion is present, DisA pauses at the lesion site. This triggers a cellular response that culminates in a temporary block in sporulation initiation. In terms of biological role, also has diadenylate cyclase activity, catalyzing the condensation of 2 ATP molecules into cyclic di-AMP (c-di-AMP). c-di-AMP acts as a signaling molecule that couples DNA integrity with progression of sporulation. The rise in c-di-AMP level generated by DisA while scanning the chromosome, operates as a positive signal that advances sporulation; upon encountering a lesion, the DisA focus arrests at the damaged site and halts c-di-AMP synthesis. This is DNA integrity scanning protein DisA from Bacillus cereus (strain G9842).